A 572-amino-acid chain; its full sequence is M-phase inducer phosphatase 3 (572 aa).

Disordered regions lie at residues 95–117 (NLGDETAPLPTESPDRMSSGKLE) and 304–354 (SPSM…QRRG). A Rhodanese domain is found at 420–527 (LVEKFFIIDC…FFPEYKELCE (108 aa)). The active site involves Cys-476.

Belongs to the MPI phosphatase family.

The catalysed reaction is O-phospho-L-tyrosyl-[protein] + H2O = L-tyrosyl-[protein] + phosphate. Its function is as follows. This protein functions as a dosage-dependent inducer in mitotic control. It is a tyrosine protein phosphatase required for progression of the cell cycle. It may directly dephosphorylate p34(cdc2) and activate the p34(cdc2) kinase activity. This is M-phase inducer phosphatase 3 (cdc25-3) from Xenopus laevis (African clawed frog).